The following is a 263-amino-acid chain: uncharacterized protein (263 aa).

It belongs to the A.longa ORF167/ORF288 family.

The protein resides in the plastid. This is an uncharacterized protein from Euglena longa (Euglenophycean alga).